The sequence spans 883 residues: Phosphoenolpyruvate carboxylase (883 aa).

Active-site residues include histidine 138 and lysine 546.

It belongs to the PEPCase type 1 family. Mg(2+) serves as cofactor.

It catalyses the reaction oxaloacetate + phosphate = phosphoenolpyruvate + hydrogencarbonate. In terms of biological role, forms oxaloacetate, a four-carbon dicarboxylic acid source for the tricarboxylic acid cycle. The protein is Phosphoenolpyruvate carboxylase of Salmonella arizonae (strain ATCC BAA-731 / CDC346-86 / RSK2980).